The following is a 259-amino-acid chain: Imidazole glycerol phosphate synthase subunit HisF (259 aa).

Active-site residues include aspartate 11 and aspartate 130.

This sequence belongs to the HisA/HisF family. Heterodimer of HisH and HisF.

It is found in the cytoplasm. The catalysed reaction is 5-[(5-phospho-1-deoxy-D-ribulos-1-ylimino)methylamino]-1-(5-phospho-beta-D-ribosyl)imidazole-4-carboxamide + L-glutamine = D-erythro-1-(imidazol-4-yl)glycerol 3-phosphate + 5-amino-1-(5-phospho-beta-D-ribosyl)imidazole-4-carboxamide + L-glutamate + H(+). Its pathway is amino-acid biosynthesis; L-histidine biosynthesis; L-histidine from 5-phospho-alpha-D-ribose 1-diphosphate: step 5/9. Functionally, IGPS catalyzes the conversion of PRFAR and glutamine to IGP, AICAR and glutamate. The HisF subunit catalyzes the cyclization activity that produces IGP and AICAR from PRFAR using the ammonia provided by the HisH subunit. This Variovorax paradoxus (strain S110) protein is Imidazole glycerol phosphate synthase subunit HisF.